Here is a 658-residue protein sequence, read N- to C-terminus: Endoglucanase 3 (658 aa).

Residues 1–23 (MQLKNFYPKMSVLGIATVMALTA) form the signal peptide. Residue Cys24 is the site of N-palmitoyl cysteine attachment. Cys24 carries the S-diacylglycerol cysteine lipid modification. A propeptide spanning residues 24 to 265 (CGDENTQALF…TDSLFIDNIY (242 aa)) is cleaved from the precursor. The interval 42–83 (ENQVPVSSSDMSPTSSDAVIDPTSSSAAVVDPSTLPAEGPIT) is disordered. Residues 45–58 (VPVSSSDMSPTSSD) are compositionally biased toward low complexity. One can recognise a CBM11 domain in the interval 87-277 (GLGTLVDDFE…DSSEVEKDQP (191 aa)). Catalysis depends on Glu448, which acts as the Proton donor. Glu597 serves as the catalytic Nucleophile.

It belongs to the glycosyl hydrolase 5 (cellulase A) family. Monomer. Post-translationally, may be a lipoprotein and may be glycosylated.

It is found in the membrane. The catalysed reaction is Endohydrolysis of (1-&gt;4)-beta-D-glucosidic linkages in cellulose, lichenin and cereal beta-D-glucans.. Exhibits both endoglucanase and cellobiosidase activities. The sequence is that of Endoglucanase 3 (cel-3) from Fibrobacter succinogenes (strain ATCC 19169 / S85).